Consider the following 427-residue polypeptide: Adenylosuccinate synthetase (427 aa).

GTP-binding positions include 12–18 and 40–42; these read GDEGKGK and GHT. Asp-13 functions as the Proton acceptor in the catalytic mechanism. The Mg(2+) site is built by Asp-13 and Gly-40. IMP contacts are provided by residues 13 to 16, 38 to 41, Thr-128, Arg-142, Gln-223, Thr-238, and Arg-302; these read DEGK and NAGH. His-41 functions as the Proton donor in the catalytic mechanism. Residue 298 to 304 coordinates substrate; it reads TTTGRPR. GTP-binding positions include Arg-304, 330 to 332, and 412 to 414; these read SID and SVG.

It belongs to the adenylosuccinate synthetase family. In terms of assembly, homodimer. The cofactor is Mg(2+).

It is found in the cytoplasm. The catalysed reaction is IMP + L-aspartate + GTP = N(6)-(1,2-dicarboxyethyl)-AMP + GDP + phosphate + 2 H(+). Its pathway is purine metabolism; AMP biosynthesis via de novo pathway; AMP from IMP: step 1/2. Functionally, plays an important role in the de novo pathway of purine nucleotide biosynthesis. Catalyzes the first committed step in the biosynthesis of AMP from IMP. The polypeptide is Adenylosuccinate synthetase (Staphylococcus aureus (strain MW2)).